Reading from the N-terminus, the 399-residue chain is Acetate kinase (399 aa).

Asn10 contacts Mg(2+). Residue Lys17 coordinates ATP. Arg91 is a binding site for substrate. Residue Asp150 is the Proton donor/acceptor of the active site. Residues 210 to 214 (HLGNG), 285 to 287 (DFR), and 333 to 337 (GIGEN) contribute to the ATP site. A Mg(2+)-binding site is contributed by Glu387.

It belongs to the acetokinase family. As to quaternary structure, homodimer. Mg(2+) is required as a cofactor. Requires Mn(2+) as cofactor.

The protein resides in the cytoplasm. It catalyses the reaction acetate + ATP = acetyl phosphate + ADP. Its pathway is metabolic intermediate biosynthesis; acetyl-CoA biosynthesis; acetyl-CoA from acetate: step 1/2. In terms of biological role, catalyzes the formation of acetyl phosphate from acetate and ATP. Can also catalyze the reverse reaction. This Wigglesworthia glossinidia brevipalpis protein is Acetate kinase.